Consider the following 463-residue polypeptide: MQLMLRLNPKTFIKVGREYVLKFGHLQRVWIFNRLLIMSGDAELNEQLLSSQEHLVKHPVYKVLGQWLGNGLLLSDGKVWHQRRKIITPTFHFSILEQFVEVFDQQSNICVQRLAQKANGNTFDVYRSICAAALDIIAETAMGTKIYAQANESTPYAEAVNECTALLSWRFMSVYLQVELLFTLTHPHLKWRQTQLIRTMQEFTIKVIEKRRQALEDQQSKLMDTADEDVGSKRRMALLDVLLMSTVDGRPLTNDEIREEVDTFMFEGHDTTTSALSFCLHELSRHPEVQAKMLEEIVQVLGTDRSRPVSIRDLGELKYMECVIKESLRMYPPVPIVGRKLQTDFKYTHSVHGDGVIPAGSEIIIGIFGVHRQPETFPNPDEFIPERHENGSRVAPFKMIPFSAGPRNCIGQKFAQLEMKMMLAKIVREYELLPMGQRVECIVNIVLRSETGFQLGMRKRKHN.

Heme contacts are provided by glutamate 267 and cysteine 409.

Belongs to the cytochrome P450 family. Heme is required as a cofactor.

The protein localises to the endoplasmic reticulum membrane. Its subcellular location is the microsome membrane. Its function is as follows. May be involved in the metabolism of insect hormones and in the breakdown of synthetic insecticides. The polypeptide is Cytochrome P450 4d8 (Cyp4d8) (Drosophila melanogaster (Fruit fly)).